The following is a 162-amino-acid chain: Putative ripening-related protein 7 (162 aa).

Positions 1–30 (MAAAAASTKIVAVVVAVLLAILEMPSCAVA) are cleaved as a signal peptide.

This sequence belongs to the kiwellin family.

Its subcellular location is the secreted. This is Putative ripening-related protein 7 from Oryza sativa subsp. japonica (Rice).